The sequence spans 305 residues: Putative ABC transporter molybdenum-binding protein HVO_B0369 (305 aa).

The tat-type signal signal peptide spans 1–40 (MNPDSAAGRSSRRAFLAAVGGVAAGGLTATAGCLGRGEEA).

This sequence belongs to the bacterial solute-binding protein 1 family. WtpA subfamily. The complex is composed of two ATP-binding proteins, two transmembrane proteins (HVO_B0370) and a solute-binding protein (HVO_B0369). Post-translationally, predicted to be exported by the Tat system. The position of the signal peptide cleavage has not been experimentally proven.

Functionally, part of an ABC transporter complex involved in molybdenum import. The chain is Putative ABC transporter molybdenum-binding protein HVO_B0369 from Haloferax volcanii (strain ATCC 29605 / DSM 3757 / JCM 8879 / NBRC 14742 / NCIMB 2012 / VKM B-1768 / DS2) (Halobacterium volcanii).